A 649-amino-acid polypeptide reads, in one-letter code: MPHGLSVCSRSSQLNYSQRCFYKSNSELRRGTSPRLSIPISLAPSQRSRSPPSILGHPELRPRSHSPPPPNPQNSRDFSPVQSLACSRSPAFNCDVHETVQVSKTCGSKPKIPRVDQLSTHCRRHHSLPLHLTHFSKQFNLLHARCSDVLFSSSDRRSLHSVSRTRDPVLQSHSASRVSFHRSLSLPRDLHLQDLRSDSPLHPGESPLRLVQSAPPSPILAEDFLHPLAFPRFVCDQAGILGPSPLHIDPARPTTKALSLCTPPRPAKSTSPCNNSQLPKPTAASDKPAILPTAAASTQPGLLPNSRLRRTATSHLSAPTSPPPASANKRLQRSLHLHSRSPHSSHFRPSRICANSKQQTRARLGHSKRVGQSADLVCQCPPPPPSMLPLLLLPRGKVKAPLRPTLASLSFGSHPIPYHVTSSPPLIQFQHPFPPPSATFSVSPLGVLTTAFALNPTQSAERSCDPESPTPTLGHKTTSLSRLPLPPPHSPHSAQDRASALATDVSNSETKNCPSPTVPPPFLPNHLHPLLPGTDPPTTPRQLSPSPSSLSLRTFLDSAVISCDSSPVLPPSPSPSSHSSSSFQSCTSPPRFPCYPPPPSALDLLFSSTPGTDPFPPPDTPPPHKRTIALERLRLRQCATPFHSCDDVC.

4 disordered regions span residues 28 to 80 (LRRG…DFSP), 257 to 286 (ALSLCTPPRPAKSTSPCNNSQLPKPTAASD), 311 to 359 (TATS…SKQQ), and 458 to 550 (QSAE…PSSL). The span at 268–279 (KSTSPCNNSQLP) shows a compositional bias: polar residues. Residues 330–349 (RLQRSLHLHSRSPHSSHFRP) are compositionally biased toward basic residues. Residues 504 to 515 (DVSNSETKNCPS) show a composition bias toward polar residues. Low complexity-rich tracts occupy residues 524-533 (PNHLHPLLPG) and 540-550 (PRQLSPSPSSL).

Belongs to the tymoviridae protein p69 family.

The sequence is that of 70 kDa protein from Solanum lycopersicum (Tomato).